A 547-amino-acid chain; its full sequence is Chaperonin GroEL (547 aa).

Residues 30–33 (TLGP), lysine 51, 87–91 (DGTTT), glycine 414, 478–480 (NAA), and aspartate 494 contribute to the ATP site.

This sequence belongs to the chaperonin (HSP60) family. In terms of assembly, forms a cylinder of 14 subunits composed of two heptameric rings stacked back-to-back. Interacts with the co-chaperonin GroES.

The protein localises to the cytoplasm. It catalyses the reaction ATP + H2O + a folded polypeptide = ADP + phosphate + an unfolded polypeptide.. Functionally, together with its co-chaperonin GroES, plays an essential role in assisting protein folding. The GroEL-GroES system forms a nano-cage that allows encapsulation of the non-native substrate proteins and provides a physical environment optimized to promote and accelerate protein folding. This chain is Chaperonin GroEL, found in Klebsiella pneumoniae.